Here is a 478-residue protein sequence, read N- to C-terminus: Serine carboxypeptidase-like 33 (478 aa).

A signal peptide spans 1-33 (MNLTLPMKKQKFLLIISLLILLSLLHQDYHIEA). Intrachain disulfides connect Cys95–Cys361, Cys257–Cys268, and Cys292–Cys330. N-linked (GlcNAc...) asparagine glycosylation is found at Asn114 and Asn146. Ser188 is a catalytic residue. Asn263, Asn295, and Asn362 each carry an N-linked (GlcNAc...) asparagine glycan. Catalysis depends on residues Asp398 and His451.

This sequence belongs to the peptidase S10 family. In terms of tissue distribution, expressed in senescent leaves and flowers.

It localises to the secreted. Functionally, probable carboxypeptidase. This Arabidopsis thaliana (Mouse-ear cress) protein is Serine carboxypeptidase-like 33 (SCPL33).